The following is a 480-amino-acid chain: MEVAPEQPRWMAHPAVLNAQHPDSHHPGLAHNYMEPAQLLPPDEVDVFFNHLDSQGNPYYANPAHARARVSYSPAHARLTGGQMCRPHLLHSPGLPWLDGGKAALSAAAAHHHSPWTVSPFSKTPLHPSAAGAPGGPLSVYPGAAGGSGGGSGSSVASLTPTAAHSGSHLFGFPPTPPKEVSPDPSTTGAASPASSSAGGSVARGEDKDGVKYQVSLSESMKMEGGSPLRPGLATMGTQPATHHPIPTYPSYVPAAAHDYGSSLFHPGGFLGGPASSFTPKQRSKARSCSEGRECVNCGATATPLWRRDGTGHYLCNACGLYHKMNGQNRPLIKPKRRLSAARRAGTCCANCQTTTTTLWRRNANGDPVCNACGLYYKLHNVNRPLTMKKEGIQTRNRKMSSKSKKSKKGAECFEELSKCMQEKSPPFSAAALAGHMAPVGHLPPFSHSGHILPTPTPIHPSSSLSFGHPHPSSMVTAMG.

S73 bears the Phosphoserine mark. At R86 the chain carries Asymmetric dimethylarginine. Residues 166-208 form a disordered region; that stretch reads SGSHLFGFPPTPPKEVSPDPSTTGAASPASSSAGGSVARGEDK. The span at 183 to 201 shows a compositional bias: low complexity; the sequence is PDPSTTGAASPASSSAGGS. The residue at position 192 (S192) is a Phosphoserine. 2 consecutive GATA-type zinc fingers follow at residues 295-319 and 349-373; these read CVNC…CNAC and CANC…CNAC. K389 is covalently cross-linked (Glycyl lysine isopeptide (Lys-Gly) (interchain with G-Cter in SUMO2)). The segment at 457–480 is disordered; the sequence is TPIHPSSSLSFGHPHPSSMVTAMG.

Interacts with BRD3. Interacts with AR and CCAR1. Interacts with MDFIC.

It localises to the nucleus. Functionally, transcriptional activator which regulates endothelin-1 gene expression in endothelial cells. Binds to the consensus sequence 5'-AGATAG-3'. This is Endothelial transcription factor GATA-2 (Gata2) from Mus musculus (Mouse).